The primary structure comprises 258 residues: Probable phthiotriol/phenolphthiotriol dimycocerosates methyltransferase 2 (258 aa).

It belongs to the methyltransferase superfamily. Phthiotriol/phenolphthiotriol dimycocerosates methyltransferase family.

Catalyzes the methylation of the lipid moiety of the intermediate compounds phthiotriol and glycosylated phenolphthiotriol dimycoserosates to form phthiocerol dimycocerosates (DIM A) and glycosylated phenolphthiocerol dimycocerosates (PGL). In Mycobacterium ulcerans (strain Agy99), this protein is Probable phthiotriol/phenolphthiotriol dimycocerosates methyltransferase 2.